Consider the following 617-residue polypeptide: Protein kinase STUNTED (617 aa).

The segment at 162–187 (SSELSEGFSDKDLAKTTGQEKRKISG) is disordered. A compositionally biased stretch (basic and acidic residues) spans 169–184 (FSDKDLAKTTGQEKRK). In terms of domain architecture, Protein kinase spans 277-555 (FSLENLIGKG…RGEDDVSKWV (279 aa)). ATP is bound by residues 283–291 (IGKGGCNEV) and K305. Position 350 is a phosphotyrosine (Y350). D399 functions as the Proton acceptor in the catalytic mechanism. S403 bears the Phosphoserine mark. Position 439 is a phosphothreonine (T439). Y447 bears the Phosphotyrosine mark. Residues 590 to 617 (DSVSNSSLERSNNSLFSSSSSSSQELQS) form a disordered region. Residues 591-617 (SVSNSSLERSNNSLFSSSSSSSQELQS) are compositionally biased toward low complexity.

This sequence belongs to the protein kinase superfamily. Ser/Thr protein kinase family. Expressed ubiquitously, mostly in roots, to a lower extent in leaves, floral buds and stems, and, at low levels, in flowers and siliques.

Its subcellular location is the cytoplasm. Promotes cell proliferation in the gibberellic acid (GA) signaling pathway, acting downstream of RGA, and possibly through a negative regulation of two cyclin-dependent kinase inhibitors SIM and SMR1. The chain is Protein kinase STUNTED from Arabidopsis thaliana (Mouse-ear cress).